Consider the following 690-residue polypeptide: Serotransferrin (690 aa).

The signal sequence occupies residues 1–17; sequence MKPLLLLTLLGCLAAAL. Transferrin-like domains follow at residues 24–329 and 340–670; these read VKWC…SLKK and IKWC…SLRK. An intrachain disulfide couples C27 to C49. Residues D73 and Y103 each contribute to the Fe(3+) site. Disulfide bonds link C126-C206, C171-C185, and C234-C248. The hydrogencarbonate site is built by T128, K132, A134, and G135. Y200 is a binding site for Fe(3+). Residue H256 coordinates Fe(3+). 2 cysteine pairs are disulfide-bonded: C343-C379 and C353-C370. Fe(3+) is bound by residues D394 and Y429. Cystine bridges form between C404–C682, C419–C643, C452–C530, C476–C671, C486–C499, C496–C513, and C570–C584. Positions 454, 458, 460, and 461 each coordinate hydrogencarbonate. Y524 serves as a coordination point for Fe(3+). H592 is a binding site for Fe(3+).

This sequence belongs to the transferrin family. In terms of assembly, monomer.

It is found in the secreted. In terms of biological role, transferrins are iron binding transport proteins which can bind two Fe(3+) ions in association with the binding of an anion, usually bicarbonate. The polypeptide is Serotransferrin (tf) (Oryzias latipes (Japanese rice fish)).